A 591-amino-acid chain; its full sequence is Mono(ADP-ribosyl)transferase SpvB (591 aa).

Residues 373–576 enclose the TR mART core domain; sequence PMMGGNSSRP…LRLSDDATAD (204 aa). NAD(+) contacts are provided by residues arginine 414 and 471-477; that span reads RGLKLDK. Active-site residues include arginine 471, serine 501, and glutamate 538. Glutamate 538 contributes to the NAD(+) binding site.

Belongs to the SpvB family.

The protein localises to the secreted. The catalysed reaction is L-arginyl-[protein] + NAD(+) = N(omega)-(ADP-D-ribosyl)-L-arginyl-[protein] + nicotinamide + H(+). Its activity is regulated as follows. Inhibited by novobiocin. Mono-ADP-ribosylates eukaryotic muscle and non-muscle actin on 'Arg-177'. ADP-ribosylates all actins tested, has more activity on nonmuscle beta/gamma-actin than on muscle alpha-actin. Prefers monomeric G-actin but can weakly ADP-ribosylate F-actin. ADP-ribosylation prevents the polymerization of G-actin to F-actin, causing actin filament depolymerization, destruction of the cytoskeleton and cytotoxicity. Does not possess NAD(+)-glycohydrolase activity, unlike most mART enzymes. The protein is Mono(ADP-ribosyl)transferase SpvB (spvB) of Salmonella typhimurium.